Reading from the N-terminus, the 57-residue chain is Protein translocase subunit SecE (57 aa).

The chain crosses the membrane as a helical span at residues 30–50 (LIAGAGIVFVGFLGFLIFAIM).

This sequence belongs to the SecE/SEC61-gamma family. In terms of assembly, component of the Sec protein translocase complex. Heterotrimer consisting of SecY (alpha), SecG (beta) and SecE (gamma) subunits. The heterotrimers can form oligomers, although 1 heterotrimer is thought to be able to translocate proteins. Interacts with the ribosome. May interact with SecDF, and other proteins may be involved.

It localises to the cell membrane. In terms of biological role, essential subunit of the Sec protein translocation channel SecYEG. Clamps together the 2 halves of SecY. May contact the channel plug during translocation. The protein is Protein translocase subunit SecE of Haloquadratum walsbyi (strain DSM 16790 / HBSQ001).